Consider the following 96-residue polypeptide: Large ribosomal subunit protein uL15 (96 aa).

It belongs to the universal ribosomal protein uL15 family. Part of the 50S ribosomal subunit.

Binds to the 23S rRNA. The protein is Large ribosomal subunit protein uL15 (rplO) of Streptomyces scabiei.